Consider the following 365-residue polypeptide: Peptide chain release factor 2 (365 aa).

An N5-methylglutamine modification is found at Gln251.

The protein belongs to the prokaryotic/mitochondrial release factor family. Post-translationally, methylated by PrmC. Methylation increases the termination efficiency of RF2.

Its subcellular location is the cytoplasm. In terms of biological role, peptide chain release factor 2 directs the termination of translation in response to the peptide chain termination codons UGA and UAA. The sequence is that of Peptide chain release factor 2 from Campylobacter jejuni subsp. jejuni serotype O:23/36 (strain 81-176).